The primary structure comprises 859 residues: Ribose import ATP-binding protein RbsA 1 (859 aa).

The disordered stretch occupies residues 1-351 (MRASLENGDD…AARAPDEASE (351 aa)). The unknown stretch occupies residues 1-353 (MRASLENGDD…RAPDEASEEA (353 aa)). Basic and acidic residues predominate over residues 8–17 (GDDHDAHRLV). The segment covering 28–43 (RAARRRAFARARRGER) has biased composition (basic residues). 3 stretches are compositionally biased toward basic and acidic residues: residues 44–80 (RARG…DRRA), 89–129 (RREQ…EEGG), and 137–167 (RERE…EGDR). The span at 168-179 (RRRRSRDPRRHP) shows a compositional bias: basic residues. Composition is skewed to basic and acidic residues over residues 193–214 (GARE…GARE), 239–250 (RLDGRAVRDRGV), 263–281 (AGGD…RDVR), 288–301 (DSPR…EEVG), and 308–323 (DSGR…REDV). 2 consecutive ABC transporter domains span residues 358–594 (LALT…VGRR) and 607–851 (RDAA…TSDV). Position 390-397 (390-397 (GENGAGKS)) interacts with ATP.

Belongs to the ABC transporter superfamily. Ribose importer (TC 3.A.1.2.1) family. As to quaternary structure, the complex is composed of an ATP-binding protein (RbsA), two transmembrane proteins (RbsC) and a solute-binding protein (RbsB).

The protein resides in the cell inner membrane. The catalysed reaction is D-ribose(out) + ATP + H2O = D-ribose(in) + ADP + phosphate + H(+). In terms of biological role, part of the ABC transporter complex RbsABC involved in ribose import. Responsible for energy coupling to the transport system. This chain is Ribose import ATP-binding protein RbsA 1, found in Burkholderia pseudomallei (strain 1710b).